The chain runs to 290 residues: S-methyl-5'-thioadenosine phosphorylase 2 (290 aa).

Phosphate is bound by residues Ser14, 57–58, and 90–91; these read RH and SA. Residue Met185 participates in substrate binding. Ser186 is a binding site for phosphate. Position 209–211 (209–211) interacts with substrate; the sequence is DYD.

This sequence belongs to the PNP/MTAP phosphorylase family. MTAP subfamily. Homotrimer.

The protein resides in the cytoplasm. The protein localises to the nucleus. The catalysed reaction is S-methyl-5'-thioadenosine + phosphate = 5-(methylsulfanyl)-alpha-D-ribose 1-phosphate + adenine. The protein operates within amino-acid biosynthesis; L-methionine biosynthesis via salvage pathway; S-methyl-5-thio-alpha-D-ribose 1-phosphate from S-methyl-5'-thioadenosine (phosphorylase route): step 1/1. Functionally, catalyzes the reversible phosphorylation of S-methyl-5'-thioadenosine (MTA) to adenine and 5-methylthioribose-1-phosphate. Involved in the breakdown of MTA, a major by-product of polyamine biosynthesis. Responsible for the first step in the methionine salvage pathway after MTA has been generated from S-adenosylmethionine. Has broad substrate specificity with 6-aminopurine nucleosides as preferred substrates. This Puccinia graminis f. sp. tritici (strain CRL 75-36-700-3 / race SCCL) (Black stem rust fungus) protein is S-methyl-5'-thioadenosine phosphorylase 2.